A 258-amino-acid polypeptide reads, in one-letter code: Alpha- and beta-fibrinogenase stejnefibrase-1 (258 aa).

An N-terminal signal peptide occupies residues 1-18 (MELIRVLANLLILQLSYA). The propeptide occupies 19–24 (QKSSEL). In terms of domain architecture, Peptidase S1 spans 25–249 (IIGGDECNID…HLDWIQNIIA (225 aa)). 6 cysteine pairs are disulfide-bonded: Cys31–Cys163, Cys50–Cys66, Cys98–Cys256, Cys142–Cys210, Cys174–Cys189, and Cys200–Cys225. His65 (charge relay system) is an active-site residue. Asn103 is a glycosylation site (N-linked (GlcNAc...) asparagine). Asp110 functions as the Charge relay system in the catalytic mechanism. 4 N-linked (GlcNAc...) asparagine glycosylation sites follow: Asn121, Asn122, Asn154, and Asn170. The active-site Charge relay system is Ser204.

Belongs to the peptidase S1 family. Snake venom subfamily. In terms of assembly, monomer. In terms of tissue distribution, expressed by the venom gland.

It is found in the secreted. Its activity is regulated as follows. Its activity is inhibited by PMSF and p-nitrophenyl-p-guanidinobenzoate (NPGB). Its function is as follows. Snake venom serine protease. Degrades concomitantly alpha- (FGA) and beta-chains of fibrinogen (FGB). The sequence is that of Alpha- and beta-fibrinogenase stejnefibrase-1 from Trimeresurus stejnegeri (Chinese green tree viper).